The primary structure comprises 362 residues: UDP-N-acetylglucosamine--N-acetylmuramyl-(pentapeptide) pyrophosphoryl-undecaprenol N-acetylglucosamine transferase (362 aa).

UDP-N-acetyl-alpha-D-glucosamine is bound by residues 15-17 (TGG), Asn127, Arg165, Ser191, Ile247, 266-271 (ALTVSE), and Gln292.

It belongs to the glycosyltransferase 28 family. MurG subfamily.

It is found in the cell inner membrane. The catalysed reaction is di-trans,octa-cis-undecaprenyl diphospho-N-acetyl-alpha-D-muramoyl-L-alanyl-D-glutamyl-meso-2,6-diaminopimeloyl-D-alanyl-D-alanine + UDP-N-acetyl-alpha-D-glucosamine = di-trans,octa-cis-undecaprenyl diphospho-[N-acetyl-alpha-D-glucosaminyl-(1-&gt;4)]-N-acetyl-alpha-D-muramoyl-L-alanyl-D-glutamyl-meso-2,6-diaminopimeloyl-D-alanyl-D-alanine + UDP + H(+). Its pathway is cell wall biogenesis; peptidoglycan biosynthesis. Its function is as follows. Cell wall formation. Catalyzes the transfer of a GlcNAc subunit on undecaprenyl-pyrophosphoryl-MurNAc-pentapeptide (lipid intermediate I) to form undecaprenyl-pyrophosphoryl-MurNAc-(pentapeptide)GlcNAc (lipid intermediate II). The protein is UDP-N-acetylglucosamine--N-acetylmuramyl-(pentapeptide) pyrophosphoryl-undecaprenol N-acetylglucosamine transferase of Shewanella baltica (strain OS155 / ATCC BAA-1091).